Reading from the N-terminus, the 178-residue chain is CRISPR system ring nuclease SSO2081 (178 aa).

Residues 105 to 106 (RK) form a transition state stabilizer region.

The protein belongs to the cOA ring nuclease family. In terms of assembly, homodimer. It depends on Does not require a metal cofactor. as a cofactor.

The protein localises to the cytoplasm. The catalysed reaction is cyclic tetraadenylate = 2 5'-hydroxy-diadenylate 2',3'-cylic phosphate. In terms of biological role, CRISPR (clustered regularly interspaced short palindromic repeat) is an adaptive immune system that provides protection against mobile genetic elements (viruses, transposable elements and conjugative plasmids). CRISPR clusters contain spacers, sequences complementary to antecedent mobile elements, and target invading nucleic acids. CRISPR clusters are transcribed and processed into CRISPR RNA (crRNA). A nuclease that degrades cyclic oligoadenylates (cOA), second messengers that induce an antiviral state important for defense against invading nucleic acids. Destruction of cOA deactivates the Csx1 ribonuclease, preventing uncontrolled degradation of cellular RNA. Degrades cA4 (a tetraadenylate ring) into a linear diadenylate product with 5'-OH and 2',3'-cyclic phosphate termini. Is 10-fold more active than SSO1393, suggesting this is the major cA4 degradation enzyme. Is highly specific for cA4; it has very poor activity on cA6 and no discernible activity against a number of cyclic dinucleotides. There may be 2 active sites per homodimer. The protein is CRISPR system ring nuclease SSO2081 of Saccharolobus solfataricus (strain ATCC 35092 / DSM 1617 / JCM 11322 / P2) (Sulfolobus solfataricus).